The following is a 525-amino-acid chain: MALEQLCAVLKVLLITVLVVEGIAVAQKTQDGQNIGIKHIPATQCGIWVRTSNGGHFASPNYPDSYPPNKECIYILEAAPRQRIELTFDERYYIEPSFECRFDHLEIRDGPFGFSPLIDRYCGMKSPALIRSTGRFMWIKFSSDEELEGLGFRAKYSFIPDPDFTYLGGILNPIPDCQFELSGADGIVRSSQVEQEEKTKPGQAVDCIWTIKATPKAKIYLRFLDYQMEHSNECKRNFVAVYDGSSAIENLKAKFCSTVANDVMLKTGVGVIRMWADEGSRLSRFRMLFTSFVEPPCTSSTFFCHSNMCINNSLVCNGVQNCAYPWDENHCKEKKKAGLFEQITKTHGTIIGITSGIVLVLLIISILVQVKQPRKKVMACKTAFNKTGFQEVFDPPHYELFSLREKEISADLADLSEELDNYQKLRRSSTASRCIHDHHCGSQASSVKQSRTNLSSMELPFRNDFAQPQPMKTFNSTFKKSSYTFKQAHECPEQALEDRVMEEIPCEIYVRGRDDSAQASISIDF.

Residues 1–22 form the signal peptide; sequence MALEQLCAVLKVLLITVLVVEG. Residues 23–347 lie on the Extracellular side of the membrane; the sequence is IAVAQKTQDG…GLFEQITKTH (325 aa). Disulfide bonds link Cys-45–Cys-72, Cys-100–Cys-122, Cys-177–Cys-207, Cys-234–Cys-256, Cys-297–Cys-309, Cys-304–Cys-322, and Cys-316–Cys-331. CUB domains lie at 45–159 and 177–292; these read CGIW…YSFI and CQFE…FTSF. In terms of domain architecture, LDL-receptor class A spans 296–332; it reads PCTSSTFFCHSNMCINNSLVCNGVQNCAYPWDENHCK. N-linked (GlcNAc...) asparagine glycosylation occurs at Asn-311. A helical transmembrane segment spans residues 348-368; sequence GTIIGITSGIVLVLLIISILV. The Cytoplasmic portion of the chain corresponds to 369–525; the sequence is QVKQPRKKVM…SAQASISIDF (157 aa). At Ser-409 the chain carries Phosphoserine.

Interacts with GRIK2 and GRIK3, but neither with AMPA-nor with NMDA-sensitive glutamate receptors. N-glycosylated. In terms of tissue distribution, expressed in brain tissues, including cerebellar granule cells (at protein level).

It localises to the cell membrane. Its function is as follows. Accessory subunit of neuronal kainate-sensitive glutamate receptors, GRIK2 and GRIK3. Increases kainate-receptor channel activity, slowing the decay kinetics of the receptors, without affecting their expression at the cell surface, and increasing the open probability of the receptor channels. Modulates the agonist sensitivity of kainate receptors. Slows the decay of kainate receptor-mediated excitatory postsynaptic currents (EPSCs), thus directly influencing synaptic transmission. The protein is Neuropilin and tolloid-like protein 2 (Neto2) of Mus musculus (Mouse).